The following is a 272-amino-acid chain: Energy-coupling factor transporter ATP-binding protein EcfA1 (272 aa).

The 236-residue stretch at 2–237 folds into the ABC transporter domain; that stretch reads IKVSDVCFSY…KNIIEKAKID (236 aa). Residue 37 to 44 participates in ATP binding; the sequence is GHNGSGKS.

The protein belongs to the ABC transporter superfamily. Energy-coupling factor EcfA family. Forms a stable energy-coupling factor (ECF) transporter complex composed of 2 membrane-embedded substrate-binding proteins (S component), 2 ATP-binding proteins (A component) and 2 transmembrane proteins (T component).

The protein resides in the cell membrane. Functionally, ATP-binding (A) component of a common energy-coupling factor (ECF) ABC-transporter complex. Unlike classic ABC transporters this ECF transporter provides the energy necessary to transport a number of different substrates. The polypeptide is Energy-coupling factor transporter ATP-binding protein EcfA1 (Mesomycoplasma hyopneumoniae (strain 7448) (Mycoplasma hyopneumoniae)).